We begin with the raw amino-acid sequence, 762 residues long: Primary amine oxidase, lung isozyme (762 aa).

A signal peptide spans 1 to 16; it reads MFIFIFLSLWTLLVMG. The disordered stretch occupies residues 23-54; the sequence is GSEEGVGKQCHPSLPPRCPSRSPSDQPWTHPD. Asn136 carries N-linked (GlcNAc...) asparagine glycosylation. Cysteines 197 and 198 form a disulfide. Thr211 carries O-linked (GalNAc...) threonine glycosylation. N-linked (GlcNAc...) asparagine glycans are attached at residues Asn231 and Asn293. 383–393 serves as a coordination point for substrate; the sequence is YMDACFGMGKF. The Proton acceptor role is filled by Asp385. Cys403 and Cys429 form a disulfide bridge. 467 to 472 lines the substrate pocket; that stretch reads LLNYDY. Tyr470 (schiff-base intermediate with substrate; via topaquinone) is an active-site residue. Tyr470 carries the post-translational modification 2',4',5'-topaquinone. Cu cation contacts are provided by His519 and His521. Asp528, Leu529, Asp530, and Glu571 together coordinate Ca(2+). 577-584 is a heparin binding site; it reads PLGGGSPR. Asn617 carries an N-linked (GlcNAc...) asparagine glycan. Phe662 and Asn664 together coordinate Ca(2+). Asn665 is a glycosylation site (N-linked (GlcNAc...) asparagine). Positions 666, 672, and 673 each coordinate Ca(2+). Cu cation is bound at residue His683. Cys733 and Cys740 are oxidised to a cystine.

Belongs to the copper/topaquinone oxidase family. In terms of assembly, homodimer; disulfide-linked. Requires Cu cation as cofactor. Ca(2+) is required as a cofactor. The cofactor is L-topaquinone. In terms of processing, topaquinone (TPQ) is generated by copper-dependent autoxidation of a specific tyrosyl residue. As to expression, expressed in lung, spleen, heart and kidney.

Its subcellular location is the secreted. The protein resides in the extracellular space. The catalysed reaction is a primary methyl amine + O2 + H2O = an aldehyde + H2O2 + NH4(+). This chain is Primary amine oxidase, lung isozyme, found in Bos taurus (Bovine).